A 217-amino-acid chain; its full sequence is Adenylate kinase (217 aa).

12 to 17 (GAGKGS) contributes to the ATP binding site. The NMP stretch occupies residues 32 to 61 (STGDMFRTHIKGSTPLGLEAKKYTDQGLLV). AMP-binding positions include threonine 33, arginine 38, 59–61 (LLV), 87–90 (GYPR), and glutamine 94. Residues 128-165 (GRRTCPVCGAIYHVDNYPPKVAGICDNDGATLVQRKDD) are LID. Arginine 129 lines the ATP pocket. Residues cysteine 132 and cysteine 135 each contribute to the Zn(2+) site. 138 to 139 (IY) contributes to the ATP binding site. Zn(2+) contacts are provided by cysteine 152 and aspartate 155. Residues arginine 162 and arginine 173 each contribute to the AMP site. Residue glutamine 201 participates in ATP binding.

It belongs to the adenylate kinase family. Monomer.

It localises to the cytoplasm. It catalyses the reaction AMP + ATP = 2 ADP. It participates in purine metabolism; AMP biosynthesis via salvage pathway; AMP from ADP: step 1/1. Its function is as follows. Catalyzes the reversible transfer of the terminal phosphate group between ATP and AMP. Plays an important role in cellular energy homeostasis and in adenine nucleotide metabolism. This Acholeplasma laidlawii (strain PG-8A) protein is Adenylate kinase.